Here is a 160-residue protein sequence, read N- to C-terminus: Allophycocyanin alpha chain (160 aa).

An N4-methylasparagine modification is found at N70. Residue C80 participates in (2R,3E)-phycocyanobilin binding.

The protein belongs to the phycobiliprotein family. As to quaternary structure, component of the phycobilisome. Heterodimer of an alpha and a beta chain. Contains one covalently linked phycocyanobilin chromophore.

It is found in the cellular thylakoid membrane. Light-harvesting photosynthetic bile pigment-protein from the phycobiliprotein complex. Allophycocyanin has a maximum absorption at approximately 650 nanometers. The protein is Allophycocyanin alpha chain (apcA) of Anabaena cylindrica.